The following is a 429-amino-acid chain: MNYEVKKLEKSAVEVKLHLTAEEVKPIVDKVLAHVGEHAEVAGFRKGHAPKEVLMTNYKDHIESDVANDAINANFPEIVDKEKLEPVSYVRLKEINLKDDLNLTFDIDVYPQFELGNYKGLEAEKKSFEMTDDLLKEELEIMVRNHAKLEEVEDAGYKAQLDDTVDLAFEGFMDGAPFPGGKAESHLLKLGSKSFIDNFEEQLVGYTKGQEGEITVKFPAEYHAAELAGKPAQFKVKINAIKKLRQPELNDDFAKELGYASLDELKAKTKEETTKRENDRIENEYVSALLDKLMETTTIDVPVSMVQAEIQNRLKELEYQLSMQGFKMDDYLKMMGGNVETFAAQLAPAAEKKVKIDLILDRIAKDNNFEATDEELNQRMEEIAKMYGMDVPALEEELKKNKNLENFKASVKYDIVMKKAIDEVVKNAK.

One can recognise a PPIase FKBP-type domain in the interval D162–P247.

Belongs to the FKBP-type PPIase family. Tig subfamily.

It is found in the cytoplasm. It catalyses the reaction [protein]-peptidylproline (omega=180) = [protein]-peptidylproline (omega=0). Functionally, involved in protein export. Acts as a chaperone by maintaining the newly synthesized protein in an open conformation. Functions as a peptidyl-prolyl cis-trans isomerase. This is Trigger factor from Fusobacterium nucleatum subsp. nucleatum (strain ATCC 25586 / DSM 15643 / BCRC 10681 / CIP 101130 / JCM 8532 / KCTC 2640 / LMG 13131 / VPI 4355).